The following is a 128-amino-acid chain: Adrenodoxin (128 aa).

Ser-3 is modified (phosphoserine). Lys-6 is subject to N6-acetyllysine; alternate. Lys-6 carries the post-translational modification N6-succinyllysine; alternate. The 2Fe-2S ferredoxin-type domain maps to 7–111; it reads VTVNFINRDG…NMTVRVPDAV (105 aa). [2Fe-2S] cluster-binding residues include Cys-46, Cys-52, Cys-55, and Cys-92. Position 98 is an N6-succinyllysine (Lys-98). Ser-117 is subject to Phosphoserine.

This sequence belongs to the adrenodoxin/putidaredoxin family. In terms of assembly, interacts with CYP11A1. [2Fe-2S] cluster is required as a cofactor.

It is found in the mitochondrion matrix. Functionally, essential for the synthesis of various steroid hormones. Participates in the reduction of mitochondrial cytochrome P450 for steroidogenesis. Transfers electrons from adrenodoxin reductase to CYP11A1, a cytochrome P450 that catalyzes cholesterol side-chain cleavage. Does not form a ternary complex with adrenodoxin reductase and CYP11A1 but shuttles between the two enzymes to transfer electrons. This Ovis aries (Sheep) protein is Adrenodoxin (FDX1).